A 1053-amino-acid chain; its full sequence is MKKVVNSVLASALALTVAPMAFAAEEAATTTAPKMDADMEKTVKRLEALGLVAGYGNGEYGVDKTITRAEFATLVVRARGLEQGAKLAQFSNTYTDVKSTDWFAGFVNVASGEEIVKGFPDKSFKPQNQVTYAEAVTMIVRALGYEPSVKGVWPNSMISKASELNIARSITTPNNAATRGDIFKMLDNALRVDLMEQVEFGTDIRHEITKETLLTKYLKVTVRDMEWAQEAGNDSEDLPLVTNVPAIGLGKIKANEVTLNGKDAGIGNTTYKVADGINANDFDGQHVQVWIKDDKEDVIVWMEGSTDQEVIMDRVGEFTLKGKTFEDPKDLSNSDLADLKLELDASEKSYRFNKNTKVTYNFTRFNDPVDGLKEIIKDNADGGFTFGAKVVLDNNNEIAYIHVIDDQSMNKEDEGVKYGSEVISKIDTDKKKITNRDNDKFNDLDGKEEGKDFLVFLNGKPAKFSDLKEGMVYSVYYADGDEDKLLVFATDTVVEGKVDKVVSRNNNDYRLTIGDKTYRVYEGATFSDDGNKDVQDIDKDHWDLVDSLDDETVKLYLDASGRVRHIETKDAIDDRKQKAIVTRSATFNTSKDTWDFRVLTQKGKEITVSLEAKNIYDFDGKNFSRDNKNQDDLEDILVPSKDKDTLLLEVTLDADGKPGKVEFLKPVKVEQESGKAWDDLADEDDDMVGDYEVTDKTAVFNMTGKLEESSKRKELKNAKTAKFKDVADENDLSVIYTVNDKDEVEAIFVVEGDGLTGDAHYGQVIDFGRKGGKDTIRVWEKDGDKVVEKEYKLDGDQDDLKDEDIRRNDFIAFTVDSNDEVVVDDVVEVVNKNAKGMLAEVTDEKGMKDANIDKMVVGLVSDVSKDTITYKDADDNKKKASIKSATVYFDLYDDFGEADGVNEGDYVVMIDSGDISGTKYDYVLIVSDAKTVRKDKLEDDAEAFLKQEPSEKPDPDTKWDALPSKVEGKFTSAGPVKLYRATVELNSKVKAEDVDAIEFYFNGKKVEPSLLNFKDGVITIGYNTEDKVTSSKIKVTNKNGKDSDEATVTFVEA.

A signal peptide spans 1-23 (MKKVVNSVLASALALTVAPMAFA). SLH domains follow at residues 26–89 (EAAT…KLAQ), 90–153 (FSNT…KGVW), and 154–203 (PNSM…FGTD).

As to quaternary structure, the middle cell wall layer is composed of subunits of the middle cell wall protein. These proteins form a hexagonal array with a lattice constant of 14.5 nM in the middle cell wall layers.

It is found in the secreted. It localises to the cell wall. The protein resides in the S-layer. In terms of biological role, the middle wall protein binds to peptidoglycan and to the outer cell wall protein. The sequence is that of Middle cell wall protein from Brevibacillus brevis (strain 47 / JCM 6285 / NBRC 100599).